A 237-amino-acid chain; its full sequence is 3-oxoacyl-[acyl-carrier-protein] reductase (237 aa).

N-acetylmethionine is present on Met-1. Residues 11–14 (SRGI) and 34–35 (RN) contribute to the NADP(+) site. An N6-acetyllysine modification is found at Lys-40. Residues Asp-56 and 83–85 (AAG) each bind NADP(+). The residue at position 96 (Lys-96) is an N6-acetyllysine. Residue Ser-135 coordinates substrate. Residues Tyr-148, Lys-152, and 181–183 (VHT) each bind NADP(+). Residue Tyr-148 is the Proton acceptor of the active site. Residue Lys-195 is modified to N6-acetyllysine.

This sequence belongs to the short-chain dehydrogenases/reductases (SDR) family. In terms of assembly, homotetramer (in vitro). Heterotetramer with HSD17B8; contains two molecules each of HSD17B8 and CBR4. Does not form homotetramers when HSD17B8 is coexpressed, only heterotetramers (in vitro). Detected in liver and kidney (at protein level). Displays the highest expression in neuronal and muscle tissues.

The protein localises to the mitochondrion matrix. The enzyme catalyses a (3R)-hydroxyacyl-[ACP] + NADP(+) = a 3-oxoacyl-[ACP] + NADPH + H(+). It catalyses the reaction a quinone + NADPH + H(+) = a quinol + NADP(+). Its pathway is lipid metabolism; fatty acid biosynthesis. Functionally, component of the heterotetramer complex KAR (3-ketoacyl-[acyl carrier protein] reductase or 3-ketoacyl-[ACP] reductase) that forms part of the mitochondrial fatty acid synthase (mtFAS). Beta-subunit of the KAR heterotetramer complex, responsible for the 3-ketoacyl-ACP reductase activity of the mtFAS, reduces 3-oxoacyl-[ACP] to (3R)-hydroxyacyl-[ACP] in a NADPH-dependent manner with no chain length preference, thereby participating in mitochondrial fatty acid biosynthesis. The homotetramer has NADPH-dependent quinone reductase activity (in vitro), hence could play a role in protection against cytotoxicity of exogenous quinones. As a heterotetramer, it can also reduce 9,10-phenanthrenequinone, 1,4-benzoquinone and various other o-quinones and p-quinones (in vitro). This chain is 3-oxoacyl-[acyl-carrier-protein] reductase (CBR4), found in Homo sapiens (Human).